A 286-amino-acid polypeptide reads, in one-letter code: MSWLEKIIPSISRTETKRSNKVPEGLWEKCVKCDAVLYKPELEKNLDVCPKCDHHMRIGARSRLNIFLDPQNRQELATDVEPVDRLKFKDIKKYKDRLSSAQKDTGEKDALIAMRGELKGMPVVAVAFEFAFHGGSMGYVVGERFTRAATVALNENIPLVCFSATGGARMQEALISLMQMAKTSAVIERLKMQGTPYVSVMTDPVYGGVSASLALLGDINVAEPGARAGFAGPSIIEQTIRQKLPKGFQRAEFLLEHGAIDMIIHRGEMRDKLASLLAKFTRRAAV.

Residues 26-286 (LWEKCVKCDA…LAKFTRRAAV (261 aa)) form the CoA carboxyltransferase N-terminal domain. Positions 30, 33, 49, and 52 each coordinate Zn(2+). A C4-type zinc finger spans residues 30 to 52 (CVKCDAVLYKPELEKNLDVCPKC).

This sequence belongs to the AccD/PCCB family. In terms of assembly, acetyl-CoA carboxylase is a heterohexamer composed of biotin carboxyl carrier protein (AccB), biotin carboxylase (AccC) and two subunits each of ACCase subunit alpha (AccA) and ACCase subunit beta (AccD). Zn(2+) serves as cofactor.

It localises to the cytoplasm. It catalyses the reaction N(6)-carboxybiotinyl-L-lysyl-[protein] + acetyl-CoA = N(6)-biotinyl-L-lysyl-[protein] + malonyl-CoA. The protein operates within lipid metabolism; malonyl-CoA biosynthesis; malonyl-CoA from acetyl-CoA: step 1/1. Its function is as follows. Component of the acetyl coenzyme A carboxylase (ACC) complex. Biotin carboxylase (BC) catalyzes the carboxylation of biotin on its carrier protein (BCCP) and then the CO(2) group is transferred by the transcarboxylase to acetyl-CoA to form malonyl-CoA. The sequence is that of Acetyl-coenzyme A carboxylase carboxyl transferase subunit beta from Cellvibrio japonicus (strain Ueda107) (Pseudomonas fluorescens subsp. cellulosa).